Reading from the N-terminus, the 122-residue chain is Large ribosomal subunit protein uL14 (122 aa).

It belongs to the universal ribosomal protein uL14 family. In terms of assembly, part of the 50S ribosomal subunit. Forms a cluster with proteins L3 and L19. In the 70S ribosome, L14 and L19 interact and together make contacts with the 16S rRNA in bridges B5 and B8.

In terms of biological role, binds to 23S rRNA. Forms part of two intersubunit bridges in the 70S ribosome. The polypeptide is Large ribosomal subunit protein uL14 (Flavobacterium johnsoniae (strain ATCC 17061 / DSM 2064 / JCM 8514 / BCRC 14874 / CCUG 350202 / NBRC 14942 / NCIMB 11054 / UW101) (Cytophaga johnsonae)).